Here is a 229-residue protein sequence, read N- to C-terminus: Dihydrofolate reductase (229 aa).

Residues 11-227 enclose the DHFR domain; the sequence is SITAVVAATA…VKYIFEMWVL (217 aa). Residues Ala-17 and 23 to 29 each bind NADP(+); that span reads GIGLNGG. 37–42 lines the substrate pocket; it reads EMKYFA. 64-66 lines the NADP(+) pocket; the sequence is RKT. Arg-80 contributes to the substrate binding site. NADP(+) contacts are provided by residues 86 to 88 and 127 to 134; these read SGK and GGATLYTS.

This sequence belongs to the dihydrofolate reductase family. As to quaternary structure, monomer.

It catalyses the reaction (6S)-5,6,7,8-tetrahydrofolate + NADP(+) = 7,8-dihydrofolate + NADPH + H(+). The protein operates within cofactor biosynthesis; tetrahydrofolate biosynthesis; 5,6,7,8-tetrahydrofolate from 7,8-dihydrofolate: step 1/1. Functionally, key enzyme in folate metabolism. Catalyzes an essential reaction for de novo glycine and purine synthesis, and for DNA precursor synthesis. The sequence is that of Dihydrofolate reductase (DFR1) from Cryptococcus neoformans var. neoformans serotype D (strain JEC21 / ATCC MYA-565) (Filobasidiella neoformans).